The following is a 91-amino-acid chain: ATP synthase subunit c (91 aa).

2 helical membrane-spanning segments follow: residues 4-24 (LTMC…GTGI) and 53-73 (IGLA…LIIL).

This sequence belongs to the ATPase C chain family. In terms of assembly, F-type ATPases have 2 components, F(1) - the catalytic core - and F(0) - the membrane proton channel. F(1) has five subunits: alpha(3), beta(3), gamma(1), delta(1), epsilon(1). F(0) has three main subunits: a(1), b(2) and c(10-14). The alpha and beta chains form an alternating ring which encloses part of the gamma chain. F(1) is attached to F(0) by a central stalk formed by the gamma and epsilon chains, while a peripheral stalk is formed by the delta and b chains.

The protein resides in the cell inner membrane. Its function is as follows. F(1)F(0) ATP synthase produces ATP from ADP in the presence of a proton or sodium gradient. F-type ATPases consist of two structural domains, F(1) containing the extramembraneous catalytic core and F(0) containing the membrane proton channel, linked together by a central stalk and a peripheral stalk. During catalysis, ATP synthesis in the catalytic domain of F(1) is coupled via a rotary mechanism of the central stalk subunits to proton translocation. In terms of biological role, key component of the F(0) channel; it plays a direct role in translocation across the membrane. A homomeric c-ring of between 10-14 subunits forms the central stalk rotor element with the F(1) delta and epsilon subunits. The chain is ATP synthase subunit c from Geobacter metallireducens (strain ATCC 53774 / DSM 7210 / GS-15).